We begin with the raw amino-acid sequence, 496 residues long: Cytochrome P450 monooxygenase claT (496 aa).

The helical transmembrane segment at 2 to 22 threads the bilayer; that stretch reads LSLIVEATLLLVVLVLSAHYV. Cysteine 423 contacts heme.

This sequence belongs to the cytochrome P450 family. Heme is required as a cofactor.

Its subcellular location is the membrane. The enzyme catalyses wigandol + 4 reduced [NADPH--hemoprotein reductase] + 4 O2 = arnebinol A + 4 oxidized [NADPH--hemoprotein reductase] + 6 H2O + 4 H(+). It catalyses the reaction arnebinol A + reduced [NADPH--hemoprotein reductase] + O2 = clavilactone A + oxidized [NADPH--hemoprotein reductase] + H2O + H(+). The catalysed reaction is (2E)-geranylhydroquinone + reduced [NADPH--hemoprotein reductase] + O2 = isoalliodorol + oxidized [NADPH--hemoprotein reductase] + H2O + H(+). The protein operates within secondary metabolite biosynthesis; terpenoid biosynthesis. Cytochrome P450 monooxygenase; part of the gene cluster that mediates the biosynthesis of clavilactone A, a meroterpenoid that features a unique benzo-fused ten-membered carbocyclic ring unit with an alpha,beta-epoxy-gamma-lactone moiety, forming an intriguing 10/5/3 tricyclic nested skeleton. ClaR, ClaS and ClaT are sufficient to produce clavilactone A. Within the pathway, claT acts as a multifunctional cytochrome P450 monooxygenase that catalyzes a ten-electron oxidation to accomplish the biosynthesis of the 10/5/3 tricyclic nested skeleton in clavilactones. The biosynthesis begins with the prenyltransferase claS that transfers geranyl pyrophosphate (GPP) to hydroquinone to produces geranylhydroquinone. The cytochrome P450 monooxygenase claR then catalyzes the diradical coupling reaction between the intramolecular hydroquinone and allyl moieties to form the benzo-fused ten-membered carbocyclic ring unit of wigantol. Finally the cytochrome P450 monooxygenase claT exquisitely and stereoselectively assembles the alpha,beta-epoxy-gamma-lactone moiety, producing clavilactone A via arnebinol A. The chain is Cytochrome P450 monooxygenase claT from Ampulloclitocybe clavipes (Club foot).